The sequence spans 209 residues: Large ribosomal subunit protein uL3 (209 aa).

Residues 122 to 152 form a disordered region; that stretch reads AIKRHGQSRGPMSHGSRYHRRPGSMGPVDPN.

This sequence belongs to the universal ribosomal protein uL3 family. As to quaternary structure, part of the 50S ribosomal subunit. Forms a cluster with proteins L14 and L19. Interacts with RNA helicase CshA.

One of the primary rRNA binding proteins, it binds directly near the 3'-end of the 23S rRNA, where it nucleates assembly of the 50S subunit. Strongly stimulates 23S rRNA precursor processing by mini-ribonuclease 3 (MrnC); 20-30% DMSO can replace L3, suggesting the protein may alter rRNA conformation. The polypeptide is Large ribosomal subunit protein uL3 (Bacillus subtilis (strain 168)).